The sequence spans 354 residues: Holliday junction branch migration complex subunit RuvB (354 aa).

The segment covering 1–10 (MAIKRNQGSN) has biased composition (polar residues). The segment at 1-36 (MAIKRNQGSNPKPEKKERLTKAETHQEQDNLEESIR) is disordered. The segment covering 12 to 36 (KPEKKERLTKAETHQEQDNLEESIR) has biased composition (basic and acidic residues). Positions 13–196 (PEKKERLTKA…FGLIQRLKFY (184 aa)) are large ATPase domain (RuvB-L). Residues isoleucine 35, arginine 36, glycine 77, lysine 80, threonine 81, threonine 82, 143–145 (EDY), arginine 186, tyrosine 196, and arginine 233 each bind ATP. A Mg(2+)-binding site is contributed by threonine 81. Residues 197 to 267 (EPEELALIIK…LAAEALDIYQ (71 aa)) form a small ATPAse domain (RuvB-S) region. The head domain (RuvB-H) stretch occupies residues 270 to 354 (PQGLDWTDRL…EEQLSIFSEQ (85 aa)). Residues arginine 325 and arginine 330 each contribute to the DNA site.

It belongs to the RuvB family. In terms of assembly, homohexamer. Forms an RuvA(8)-RuvB(12)-Holliday junction (HJ) complex. HJ DNA is sandwiched between 2 RuvA tetramers; dsDNA enters through RuvA and exits via RuvB. An RuvB hexamer assembles on each DNA strand where it exits the tetramer. Each RuvB hexamer is contacted by two RuvA subunits (via domain III) on 2 adjacent RuvB subunits; this complex drives branch migration. In the full resolvosome a probable DNA-RuvA(4)-RuvB(12)-RuvC(2) complex forms which resolves the HJ.

Its subcellular location is the cytoplasm. The enzyme catalyses ATP + H2O = ADP + phosphate + H(+). In terms of biological role, the RuvA-RuvB-RuvC complex processes Holliday junction (HJ) DNA during genetic recombination and DNA repair, while the RuvA-RuvB complex plays an important role in the rescue of blocked DNA replication forks via replication fork reversal (RFR). RuvA specifically binds to HJ cruciform DNA, conferring on it an open structure. The RuvB hexamer acts as an ATP-dependent pump, pulling dsDNA into and through the RuvAB complex. RuvB forms 2 homohexamers on either side of HJ DNA bound by 1 or 2 RuvA tetramers; 4 subunits per hexamer contact DNA at a time. Coordinated motions by a converter formed by DNA-disengaged RuvB subunits stimulates ATP hydrolysis and nucleotide exchange. Immobilization of the converter enables RuvB to convert the ATP-contained energy into a lever motion, pulling 2 nucleotides of DNA out of the RuvA tetramer per ATP hydrolyzed, thus driving DNA branch migration. The RuvB motors rotate together with the DNA substrate, which together with the progressing nucleotide cycle form the mechanistic basis for DNA recombination by continuous HJ branch migration. Branch migration allows RuvC to scan DNA until it finds its consensus sequence, where it cleaves and resolves cruciform DNA. This is Holliday junction branch migration complex subunit RuvB from Crocosphaera subtropica (strain ATCC 51142 / BH68) (Cyanothece sp. (strain ATCC 51142)).